We begin with the raw amino-acid sequence, 123 residues long: Gamma-synuclein (123 aa).

A run of 2 repeats spans residues 20-30 and 31-41. The tract at residues 20–67 is 4 X 11 AA tandem repeats of [EGSA]-K-T-K-[EQ]-[GQ]-V-X(4); sequence EKTKQGVTEAAEKTKEGVMYVGTKTKGERGTSVTSVAEKTKEQANAVS. Residues 42 to 56 form a 3; approximate repeat; the sequence is TKTKGERGTSVTSVA. Repeat 4 spans residues 57-67; that stretch reads EKTKEQANAVS. Phosphoserine occurs at positions 67 and 72. Residues 93–123 are disordered; the sequence is GVVRKEDLEPPAQDQEAKEQEEGEEAKSGGD. Basic and acidic residues predominate over residues 107–123; it reads QEAKEQEEGEEAKSGGD. Serine 120 is subject to Phosphoserine; by BARK1, CaMK2 and CK2.

The protein belongs to the synuclein family. As to quaternary structure, may be a centrosome-associated protein. Interacts with MYOC; affects its secretion and its aggregation. Phosphorylated. Phosphorylation by GRK5 appears to occur on residues distinct from the residue phosphorylated by other kinases. Specifically expressed in the peripheral nervous system. High expression in motoneurons of the brainstem. Also found in neurons of many other brain regions including the cerebellar cortex, thalamus, hypothalamus and CA1, CA2, CA3 and CA4 regions of the hippocampus.

It is found in the cytoplasm. The protein localises to the perinuclear region. Its subcellular location is the cytoskeleton. The protein resides in the microtubule organizing center. It localises to the centrosome. It is found in the spindle. In terms of biological role, plays a role in neurofilament network integrity. May be involved in modulating axonal architecture during development and in the adult. In vitro, increases the susceptibility of neurofilament-H to calcium-dependent proteases. May also function in modulating the keratin network in skin. Activates the MAPK and Elk-1 signal transduction pathway. The protein is Gamma-synuclein (Sncg) of Rattus norvegicus (Rat).